The chain runs to 232 residues: Orotate phosphoribosyltransferase (232 aa).

5-phospho-alpha-D-ribose 1-diphosphate contacts are provided by residues Arg107, Lys108, Lys111, His113, and 133-141 (EDLTTAGGS). An orotate-binding site is contributed by Thr137.

This sequence belongs to the purine/pyrimidine phosphoribosyltransferase family. PyrE subfamily. As to quaternary structure, homodimer. Mg(2+) serves as cofactor.

It carries out the reaction orotidine 5'-phosphate + diphosphate = orotate + 5-phospho-alpha-D-ribose 1-diphosphate. It participates in pyrimidine metabolism; UMP biosynthesis via de novo pathway; UMP from orotate: step 1/2. In terms of biological role, catalyzes the transfer of a ribosyl phosphate group from 5-phosphoribose 1-diphosphate to orotate, leading to the formation of orotidine monophosphate (OMP). This chain is Orotate phosphoribosyltransferase, found in Sinorhizobium medicae (strain WSM419) (Ensifer medicae).